Consider the following 229-residue polypeptide: Ribonuclease 3 (229 aa).

The 123-residue stretch at Leu5–Gly127 folds into the RNase III domain. Glu40 contacts Mg(2+). The active site involves Asp44. 2 residues coordinate Mg(2+): Asp113 and Glu116. Residue Glu116 is part of the active site. The 71-residue stretch at Asp154–Val224 folds into the DRBM domain.

This sequence belongs to the ribonuclease III family. Homodimer. The cofactor is Mg(2+).

Its subcellular location is the cytoplasm. The catalysed reaction is Endonucleolytic cleavage to 5'-phosphomonoester.. Its function is as follows. Digests double-stranded RNA. Involved in the processing of primary rRNA transcript to yield the immediate precursors to the large and small rRNAs (23S and 16S). Processes some mRNAs, and tRNAs when they are encoded in the rRNA operon. Processes pre-crRNA and tracrRNA of type II CRISPR loci if present in the organism. This chain is Ribonuclease 3, found in Pseudomonas fluorescens (strain ATCC BAA-477 / NRRL B-23932 / Pf-5).